We begin with the raw amino-acid sequence, 702 residues long: Phosphatase and actin regulator 4 (702 aa).

3 disordered regions span residues 1 to 37, 72 to 194, and 222 to 363; these read MEDP…KSKF, RKPR…SSGG, and NLSV…PFPA. One copy of the RPEL 1 repeat lies at 63–88; the sequence is EVLERKISMRKPREELVKRGVLLEDP. Over residues 72-84 the composition is skewed to basic and acidic residues; the sequence is RKPREELVKRGVL. Over residues 106-120 the composition is skewed to polar residues; it reads GHTTPIGNARSSSPV. A phosphoserine mark is found at serine 116, serine 118, serine 131, and serine 147. The span at 147–156 shows a compositional bias: polar residues; the sequence is STGSQPNSEA. Residues 163–173 show a composition bias toward pro residues; the sequence is VPKPPLLPPKR. The span at 233-250 shows a compositional bias: low complexity; that stretch reads TLPAAPASTNTTATPSLT. Residues serine 270 and serine 291 each carry the phosphoserine modification. A compositionally biased stretch (polar residues) spans 301–318; it reads PSTSVPTLESAAAITTKT. Phosphoserine occurs at positions 342 and 344. Positions 342–362 are enriched in pro residues; sequence SPSPPLPTHIPPEPPRTPPFP. Threonine 358 is subject to Phosphothreonine. A Phosphoserine modification is found at serine 427. Threonine 432 carries the phosphothreonine modification. Serine 443, serine 453, and serine 464 each carry phosphoserine. The segment at 469 to 536 is disordered; the sequence is IEMLKVPDDE…EEDEDESYQS (68 aa). Over residues 484-497 the composition is skewed to polar residues; that stretch reads TCPSTFSEEMTPTS. The segment covering 508 to 518 has biased composition (acidic residues); sequence EEEEKESDSDS. Phosphoserine is present on residues serine 514, serine 516, serine 557, and serine 590. RPEL repeat units lie at residues 583–608 and 621–646; these read NTLI…QPKN and RRLT…RFNE. The disordered stretch occupies residues 592-615; it reads RPTPEELEQRNILQPKNEADRQAE. Serine 628 carries the post-translational modification Phosphoserine.

It belongs to the phosphatase and actin regulator family. In terms of assembly, binds PPP1CA and actin.

It localises to the cytoplasm. The protein resides in the cell projection. Its subcellular location is the lamellipodium. Regulator of protein phosphatase 1 (PP1) required for neural tube and optic fissure closure, and enteric neural crest cell (ENCCs) migration during development. Acts as an activator of PP1 by interacting with PPP1CA and preventing phosphorylation of PPP1CA at 'Thr-320'. During neural tube closure, localizes to the ventral neural tube and activates PP1, leading to down-regulate cell proliferation within cranial neural tissue and the neural retina. Also acts as a regulator of migration of enteric neural crest cells (ENCCs) by activating PP1, leading to dephosphorylation and subsequent activation of cofilin (COF1 or COF2) and repression of the integrin signaling through the RHO/ROCK pathway. This Homo sapiens (Human) protein is Phosphatase and actin regulator 4 (PHACTR4).